We begin with the raw amino-acid sequence, 424 residues long: Serine--tRNA ligase (424 aa).

An L-serine-binding site is contributed by 230–232 (TAE). 261-263 (RSE) provides a ligand contact to ATP. Glu284 is an L-serine binding site. 348–351 (EISS) serves as a coordination point for ATP. An L-serine-binding site is contributed by Ser384.

The protein belongs to the class-II aminoacyl-tRNA synthetase family. Type-1 seryl-tRNA synthetase subfamily. In terms of assembly, homodimer. The tRNA molecule binds across the dimer.

Its subcellular location is the cytoplasm. The enzyme catalyses tRNA(Ser) + L-serine + ATP = L-seryl-tRNA(Ser) + AMP + diphosphate + H(+). It carries out the reaction tRNA(Sec) + L-serine + ATP = L-seryl-tRNA(Sec) + AMP + diphosphate + H(+). The protein operates within aminoacyl-tRNA biosynthesis; selenocysteinyl-tRNA(Sec) biosynthesis; L-seryl-tRNA(Sec) from L-serine and tRNA(Sec): step 1/1. Catalyzes the attachment of serine to tRNA(Ser). Is also able to aminoacylate tRNA(Sec) with serine, to form the misacylated tRNA L-seryl-tRNA(Sec), which will be further converted into selenocysteinyl-tRNA(Sec). This Streptococcus pneumoniae (strain Hungary19A-6) protein is Serine--tRNA ligase.